Here is a 256-residue protein sequence, read N- to C-terminus: Nuclear shuttle protein (256 aa).

The segment covering 1–16 (MYSTSNRRGRSQTQRG) has biased composition (polar residues). The disordered stretch occupies residues 1–46 (MYSTSNRRGRSQTQRGSHVRRTGVKRSYGAARGDDRRRPNVVSKTQ). Residues 21–42 (RTGVKRSYGAARGDDRRRPNVV) carry the Bipartite nuclear localization signal motif. Residues 81–96 (SYVKTVPNRTRTYIKL) carry the Nuclear localization signal motif. The tract at residues 150–187 (ELFGARIHCHGNLSVVPALKDRYYIRHVTKRVVSLEKD) is interaction with Arabidopsis thaliana NSI protein. The Nuclear export signal signature appears at 177 to 198 (VTKRVVSLEKDTLLIDLHGTTQ).

It belongs to the begomovirus nuclear shuttle protein family. Binds to single-stranded and double-stranded viral DNA. Interacts with the host nuclear shuttle interacting (NSI) protein. This interaction may allow NSP to recruit NSI monomers to the viral genome and thus regulate nuclear export of viral genome by NSP.

It localises to the host nucleus. It is found in the host cytoplasm. Its subcellular location is the host cell membrane. In terms of biological role, binds to the genomic viral ssDNA, shuttles it into and out of the cell nucleus. Begomoviruses use 2 proteins to transport their DNA from cell to cell. The nuclear shuttle protein (NSP) shuttles it between nucleus and cytoplasm and the movement protein (MP) probably transports the DNA-NSP complex to the cell periphery and facilitates movement across the cell wall. This Squash leaf curl virus (SLCV) protein is Nuclear shuttle protein.